The sequence spans 103 residues: Large ribosomal subunit protein bL21 (103 aa).

Belongs to the bacterial ribosomal protein bL21 family. Part of the 50S ribosomal subunit. Contacts protein L20.

Its function is as follows. This protein binds to 23S rRNA in the presence of protein L20. In Pseudomonas fluorescens (strain Pf0-1), this protein is Large ribosomal subunit protein bL21.